We begin with the raw amino-acid sequence, 435 residues long: Trigger factor (435 aa).

One can recognise a PPIase FKBP-type domain in the interval 183 to 263; that stretch reads GDFINVDVTI…VKTIWQGNMP (81 aa).

Belongs to the FKBP-type PPIase family. Tig subfamily.

The protein localises to the cytoplasm. The catalysed reaction is [protein]-peptidylproline (omega=180) = [protein]-peptidylproline (omega=0). Functionally, involved in protein export. Acts as a chaperone by maintaining the newly synthesized protein in an open conformation. Functions as a peptidyl-prolyl cis-trans isomerase. The sequence is that of Trigger factor from Protochlamydia amoebophila (strain UWE25).